The sequence spans 103 residues: Co-chaperonin GroES (103 aa).

The protein belongs to the GroES chaperonin family. In terms of assembly, heptamer of 7 subunits arranged in a ring. Interacts with the chaperonin GroEL.

The protein localises to the plastid. The protein resides in the cyanelle. Functionally, together with the chaperonin GroEL, plays an essential role in assisting protein folding. The GroEL-GroES system forms a nano-cage that allows encapsulation of the non-native substrate proteins and provides a physical environment optimized to promote and accelerate protein folding. GroES binds to the apical surface of the GroEL ring, thereby capping the opening of the GroEL channel. This is Co-chaperonin GroES from Cyanophora paradoxa.